The chain runs to 1225 residues: uncharacterized protein (1225 aa).

The span at M1–D15 shows a compositional bias: polar residues. A disordered region spans residues M1–S104. Over residues P16–L25 the composition is skewed to basic and acidic residues. Positions A43–D65 are enriched in polar residues. Residues F167 to I187 form a helical membrane-spanning segment. The SMP-LTD domain occupies D217–E422. C2 domains follow at residues S413–F534, D559–F668, and K685–M803. S843 is subject to Phosphoserine. Residues P867–T890 form a disordered region. The segment covering S869–T890 has biased composition (polar residues). A C2 4 domain is found at R1019–I1137. Ca(2+) is bound by residues D1053, D1059, D1107, D1109, and D1115.

Requires Ca(2+) as cofactor.

Its subcellular location is the endoplasmic reticulum membrane. This is an uncharacterized protein from Schizosaccharomyces pombe (strain 972 / ATCC 24843) (Fission yeast).